The primary structure comprises 193 residues: Potassium-transporting ATPase KdpC subunit (193 aa).

Residues 7-27 (PMIVIFAVLAALTGLAYPAVM) form a helical membrane-spanning segment.

The protein belongs to the KdpC family. In terms of assembly, the system is composed of three essential subunits: KdpA, KdpB and KdpC.

Its subcellular location is the cell inner membrane. Functionally, part of the high-affinity ATP-driven potassium transport (or Kdp) system, which catalyzes the hydrolysis of ATP coupled with the electrogenic transport of potassium into the cytoplasm. This subunit acts as a catalytic chaperone that increases the ATP-binding affinity of the ATP-hydrolyzing subunit KdpB by the formation of a transient KdpB/KdpC/ATP ternary complex. The chain is Potassium-transporting ATPase KdpC subunit from Paraburkholderia phymatum (strain DSM 17167 / CIP 108236 / LMG 21445 / STM815) (Burkholderia phymatum).